A 208-amino-acid chain; its full sequence is NAD(P)H dehydrogenase (quinone) (208 aa).

The Flavodoxin-like domain maps to 4–199; sequence VNVIFHSIHG…AMARYQGRHV (196 aa). FMN contacts are provided by residues 10–15 and 87–89; these read SIHGHT and TRY. Trp-107 lines the substrate pocket. FMN-binding positions include 122–128 and His-143; that span reads SSGTQHG.

This sequence belongs to the WrbA family. It depends on FMN as a cofactor.

The catalysed reaction is a quinone + NADH + H(+) = a quinol + NAD(+). The enzyme catalyses a quinone + NADPH + H(+) = a quinol + NADP(+). The protein is NAD(P)H dehydrogenase (quinone) of Methanosarcina barkeri (strain Fusaro / DSM 804).